Here is a 129-residue protein sequence, read N- to C-terminus: Glycine cleavage system H protein (129 aa).

The 83-residue stretch at 24–106 (SYTVGITEHA…YGDGWFFRIM (83 aa)) folds into the Lipoyl-binding domain. Lysine 65 carries the post-translational modification N6-lipoyllysine.

It belongs to the GcvH family. The glycine cleavage system is composed of four proteins: P, T, L and H. (R)-lipoate is required as a cofactor.

Functionally, the glycine cleavage system catalyzes the degradation of glycine. The H protein shuttles the methylamine group of glycine from the P protein to the T protein. The chain is Glycine cleavage system H protein from Shewanella denitrificans (strain OS217 / ATCC BAA-1090 / DSM 15013).